A 169-amino-acid chain; its full sequence is MLHAFERKMAGHGILMIFCTLLFGVGLWMHLVGGFEIIPGYILEFHVPGSPEGWARAHSGPALNGMMVIAVAFVLPSLGFADKKPHLLGNIIILDGWANVGFYFFSNFSPNRGLTFGPNHFGPGDIFSFLALAPAYLFGVLAMGALAVIGYQALKSVGSRKAVPHATAE.

4 helical membrane passes run glycine 13–glycine 33, proline 61–alanine 81, proline 85–phenylalanine 105, and phenylalanine 129–isoleucine 149.

The protein localises to the membrane. The catalysed reaction is styrene oxide = 2-phenylacetaldehyde. It participates in aromatic compound metabolism. Functionally, epoxystyrene isomerase that catalyzes the second step in the aerobic styrene degradation pathway by converting epoxystyrene to phenylacetaldehyde. The protein is Styrene-oxide isomerase (styC) of Pseudomonas fluorescens.